Here is a 518-residue protein sequence, read N- to C-terminus: DNA-binding protein D-ETS-4 (518 aa).

Disordered regions lie at residues 74–113 and 152–172; these read SQPIQQQQQPTAPYTNPSSHQLIPPPAYPHSAYPSPQSSP and LPPSPPESNCETPSPRSSCGE. The span at 84 to 94 shows a compositional bias: polar residues; sequence TAPYTNPSSHQ. Over residues 102-113 the composition is skewed to low complexity; it reads PHSAYPSPQSSP. Positions 158–171 are enriched in polar residues; the sequence is ESNCETPSPRSSCG. Positions 258–344 constitute a PNT domain; that stretch reads HAKREADAIC…AQLEIWKMAY (87 aa). The interval 393–426 is disordered; sequence APLNGSTTSPPATNASNGGTATVKRPNGGRTGGG. A compositionally biased stretch (polar residues) spans 396-412; sequence NGSTTSPPATNASNGGT. A DNA-binding region (ETS) is located at residues 430–513; the sequence is IHLWQFLKEL…RSQRLVYQFC (84 aa).

Belongs to the ETS family. Transient high expression in pole cells during embryonic stages 8-11.

Its subcellular location is the nucleus. Functionally, may have a role in germline development. This is DNA-binding protein D-ETS-4 (Ets98B) from Drosophila melanogaster (Fruit fly).